The primary structure comprises 961 residues: Zinc finger protein basonuclin-1 (961 aa).

Residues 210-219 (MTFMLPFQFF) form a hydrophobic region. C2H2-type zinc fingers lie at residues 325–348 (VFCTACEKTFYDKGTLKIHYNAVH) and 353–382 (HKCTIEGCNMVFSSLRSRNRHSANPNPRLH). The interval 370-393 (RNRHSANPNPRLHMPMNRNNRDKD) is disordered. The short motif at 501–507 (PKKKSRK) is the Nuclear localization signal element. 2 positions are modified to phosphoserine: serine 505 and serine 509. Positions 523 to 572 (EEKRHSLSSDDEVPLQVVSEDEPEDSSPRSDRVPEEQHTQLSLEEPLPQG) are disordered. A compositionally biased stretch (acidic residues) spans 531 to 547 (SDDEVPLQVVSEDEPED). Residues 548 to 560 (SSPRSDRVPEEQH) are compositionally biased toward basic and acidic residues. 2 consecutive C2H2-type zinc fingers follow at residues 687 to 711 (FQCDICKKTFKNACSMKTHEKNTHA) and 715 to 743 (HACTVEGCGAAFPSRRSRDRHSSNLSLHQ). The disordered stretch occupies residues 810-864 (ESYNSGPPSEGTILDLSTTSSMKSESSSHSSWDSDGVSEEGTALMEDSDGNCEGQ). Positions 826 to 844 (STTSSMKSESSSHSSWDSD) are enriched in low complexity. 2 C2H2-type zinc fingers span residues 895–918 (ITCHLCQKIYSNKGTFRAHYKTVH) and 923–950 (HKCKVPGCNTMFSSVRSRNRHSQNPNLH). Residues 937-961 (VRSRNRHSQNPNLHKSLASSPSHLQ) form a disordered region.

As to quaternary structure, interacts with HSF2BP (via C-terminus). In terms of processing, phosphorylation on Ser-505 and Ser-509 leads to cytoplasmic localization. As to expression, epidermis and germ cells of testis and ovary.

It is found in the nucleus. Its subcellular location is the cytoplasm. The protein resides in the nucleoplasm. Transcriptional activator. It is likely involved in the regulation of keratinocytes terminal differentiation in squamous epithelia and hair follicles. Required for the maintenance of spermatogenesis. It is involved in the positive regulation of oocyte maturation, probably acting through the control of BMP15 levels and regulation of AKT signaling cascade. May also play a role in the early development of embryos. This Mus musculus (Mouse) protein is Zinc finger protein basonuclin-1 (Bnc1).